The following is a 627-amino-acid chain: Coiled-coil domain-containing protein 22 (627 aa).

Residues 1-321 (MEEADRILIH…VSDVPATSRR (321 aa)) are sufficient for interaction with COMMD1. The interval 1-447 (MEEADRILIH…LQDCRELESS (447 aa)) is sufficicient and required for interaction with CCDC93. Residues 218–243 (TGRDRPGDEDWVHRTSRLPPQEDTRA) form a disordered region. Over residues 219–230 (GRDRPGDEDWVH) the composition is skewed to basic and acidic residues. Residues 320–627 (RRPEQVTWAA…AGLLGRVREA (308 aa)) are a coiled coil. Ser-410 is modified (phosphoserine).

It belongs to the CCDC22 family. As to quaternary structure, component of the commander complex consisting of the CCC subcomplex and the retriever subcomplex. Component of the CCC (COMMD/CCDC22/CCDC93) subcomplex consisting of COMMD1, COMMD2, COMMD3, COMMD4, COMMD5, COMMD6, COMMD7, COMMD8, COMMD9, COMMD10, CCDC22 and CCDC93. Forms a coiled-coil heterodimer with CCDC22; this heterodimer interacts with the guanine nucleotide exchange factor DENND10; the interaction is direct. Interacts with CUL1, CUL2, CUL3, SKP1, BTRC. Interacts with SNX17 and SNX31. Interacts with CPNE1 and CPNE4. As to expression, widely expressed in adult tissues and in fetal liver and brain, with highest levels in prostate and lowest in skeletal muscle.

It is found in the endosome. The protein localises to the cytoplasm. Its subcellular location is the cytoskeleton. It localises to the microtubule organizing center. The protein resides in the centrosome. Its function is as follows. Component of the commander complex that is essential for endosomal recycling of transmembrane cargos; the Commander complex is composed of composed of the CCC subcomplex and the retriever subcomplex. Component of the CCC complex, which is involved in the regulation of endosomal recycling of surface proteins, including integrins, signaling receptor and channels. Involved in regulation of NF-kappa-B signaling. Promotes ubiquitination of I-kappa-B-kinase subunit IKBKB and its subsequent proteasomal degradation leading to NF-kappa-B activation; the function may involve association with COMMD8 and a CUL1-dependent E3 ubiquitin ligase complex. May down-regulate NF-kappa-B activity via association with COMMD1 and involving a CUL2-dependent E3 ubiquitin ligase complex. Regulates the cellular localization of COMM domain-containing proteins, such as COMMD1 and COMMD10. Component of the CCC complex, which is involved in the regulation of endosomal recycling of surface proteins, including integrins, signaling receptor and channels. The CCC complex associates with SNX17, retriever and WASH complexes to prevent lysosomal degradation and promote cell surface recycling of numerous cargos such as integrins ITGA5:ITGB1. Plays a role in copper ion homeostasis. Involved in copper-dependent ATP7A trafficking between the trans-Golgi network and vesicles in the cell periphery; the function is proposed to depend on its association within the CCC complex and cooperation with the WASH complex on early endosomes. Functionally, (Microbial infection) The CCC complex, in collaboration with the heterotrimeric retriever complex, mediates the exit of human papillomavirus to the cell surface. This chain is Coiled-coil domain-containing protein 22 (CCDC22), found in Homo sapiens (Human).